Here is a 535-residue protein sequence, read N- to C-terminus: Dual specificity calcium/calmodulin-dependent 3',5'-cyclic nucleotide phosphodiesterase 1B (535 aa).

A disordered region spans residues 1-21; sequence MELSPRSPPEMLESDCPSPLE. S7 and S14 each carry phosphoserine. 2 calmodulin-binding regions span residues 26–46 and 117–140; these read PSKK…KQLE and EKPK…MFRR. One can recognise a PDEase domain in the interval 145-502; the sequence is VGPTYSTAVH…QKWKERAASG (358 aa). Catalysis depends on H222, which acts as the Proton donor. Zn(2+)-binding residues include H226, H262, D263, and D369. D263 is a Mg(2+) binding site. 2 disordered regions span residues 445-474 and 495-535; these read PLAD…GDPN and WKER…GNLD. The segment covering 454 to 463 has biased composition (polar residues); it reads KSQPSFQWRQ. A phosphoserine mark is found at S465 and S513.

It belongs to the cyclic nucleotide phosphodiesterase family. PDE1 subfamily. In terms of assembly, homodimer. The cofactor is Zn(2+). Mg(2+) is required as a cofactor.

It localises to the cytoplasm. It is found in the cytosol. The catalysed reaction is a nucleoside 3',5'-cyclic phosphate + H2O = a nucleoside 5'-phosphate + H(+). It carries out the reaction 3',5'-cyclic GMP + H2O = GMP + H(+). It catalyses the reaction 3',5'-cyclic AMP + H2O = AMP + H(+). Type I PDE are activated by the binding of calmodulin in the presence of Ca(2+). Functionally, cyclic nucleotide phosphodiesterase with a dual specificity for the second messengers cAMP and cGMP, which are key regulators of many important physiological processes. Has a preference for cGMP as a substrate. This chain is Dual specificity calcium/calmodulin-dependent 3',5'-cyclic nucleotide phosphodiesterase 1B, found in Cricetulus griseus (Chinese hamster).